Reading from the N-terminus, the 753-residue chain is Protein transport protein SEC23-1 (753 aa).

Residues Cys-56, Cys-61, Cys-80, and Cys-83 each coordinate Zn(2+).

It belongs to the SEC23/SEC24 family. SEC23 subfamily. As to quaternary structure, the COPII coat is composed of at least 5 proteins: the SEC23/24 complex, the SEC13/31 complex, and the protein SAR1.

It localises to the cytoplasm. Its subcellular location is the cytoplasmic vesicle. It is found in the COPII-coated vesicle membrane. The protein localises to the endoplasmic reticulum membrane. The protein resides in the golgi apparatus membrane. Functionally, component of the coat protein complex II (COPII) which promotes the formation of transport vesicles from the endoplasmic reticulum (ER). The coat has two main functions, the physical deformation of the endoplasmic reticulum membrane into vesicles and the selection of cargo molecules. The sequence is that of Protein transport protein SEC23-1 (SEC231) from Candida glabrata (strain ATCC 2001 / BCRC 20586 / JCM 3761 / NBRC 0622 / NRRL Y-65 / CBS 138) (Yeast).